A 183-amino-acid polypeptide reads, in one-letter code: ATP synthase subunit delta (183 aa).

It belongs to the ATPase delta chain family. As to quaternary structure, F-type ATPases have 2 components, F(1) - the catalytic core - and F(0) - the membrane proton channel. F(1) has five subunits: alpha(3), beta(3), gamma(1), delta(1), epsilon(1). F(0) has three main subunits: a(1), b(2) and c(10-14). The alpha and beta chains form an alternating ring which encloses part of the gamma chain. F(1) is attached to F(0) by a central stalk formed by the gamma and epsilon chains, while a peripheral stalk is formed by the delta and b chains.

The protein localises to the cell membrane. Its function is as follows. F(1)F(0) ATP synthase produces ATP from ADP in the presence of a proton or sodium gradient. F-type ATPases consist of two structural domains, F(1) containing the extramembraneous catalytic core and F(0) containing the membrane proton channel, linked together by a central stalk and a peripheral stalk. During catalysis, ATP synthesis in the catalytic domain of F(1) is coupled via a rotary mechanism of the central stalk subunits to proton translocation. This protein is part of the stalk that links CF(0) to CF(1). It either transmits conformational changes from CF(0) to CF(1) or is implicated in proton conduction. This Oenococcus oeni (strain ATCC BAA-331 / PSU-1) protein is ATP synthase subunit delta.